The sequence spans 345 residues: S-adenosylmethionine:tRNA ribosyltransferase-isomerase (345 aa).

This sequence belongs to the QueA family. As to quaternary structure, monomer.

The protein localises to the cytoplasm. The catalysed reaction is 7-aminomethyl-7-carbaguanosine(34) in tRNA + S-adenosyl-L-methionine = epoxyqueuosine(34) in tRNA + adenine + L-methionine + 2 H(+). The protein operates within tRNA modification; tRNA-queuosine biosynthesis. Its function is as follows. Transfers and isomerizes the ribose moiety from AdoMet to the 7-aminomethyl group of 7-deazaguanine (preQ1-tRNA) to give epoxyqueuosine (oQ-tRNA). This is S-adenosylmethionine:tRNA ribosyltransferase-isomerase from Acinetobacter baumannii (strain AB0057).